The primary structure comprises 124 residues: UPF0482 protein YpsIP31758_1865 (124 aa).

The first 32 residues, 1-32 (MMKINNLPRLIRTFLPATLLMLPLVWQTPALA), serve as a signal peptide directing secretion. The tract at residues 47–68 (GGNNDPMSKEQARQSQQQWDET) is disordered.

The protein belongs to the UPF0482 family.

This chain is UPF0482 protein YpsIP31758_1865, found in Yersinia pseudotuberculosis serotype O:1b (strain IP 31758).